The chain runs to 131 residues: Small ribosomal subunit protein uS8 (131 aa).

The protein belongs to the universal ribosomal protein uS8 family. Part of the 30S ribosomal subunit. Contacts proteins S5 and S12.

Its function is as follows. One of the primary rRNA binding proteins, it binds directly to 16S rRNA central domain where it helps coordinate assembly of the platform of the 30S subunit. This Variovorax paradoxus (strain S110) protein is Small ribosomal subunit protein uS8.